Here is a 93-residue protein sequence, read N- to C-terminus: Chaperone NapD (93 aa).

This sequence belongs to the NapD family. As to quaternary structure, interacts with the cytoplasmic NapA precursor.

The protein localises to the cytoplasm. Functionally, chaperone for NapA, the catalytic subunit of the periplasmic nitrate reductase. It binds directly and specifically to the twin-arginine signal peptide of NapA, preventing premature interaction with the Tat translocase and premature export. This chain is Chaperone NapD, found in Haemophilus influenzae (strain ATCC 51907 / DSM 11121 / KW20 / Rd).